Here is a 309-residue protein sequence, read N- to C-terminus: 4-hydroxy-3-methylbut-2-enyl diphosphate reductase (309 aa).

Cys13 contributes to the [4Fe-4S] cluster binding site. Positions 42 and 75 each coordinate (2E)-4-hydroxy-3-methylbut-2-enyl diphosphate. Dimethylallyl diphosphate is bound by residues His42 and His75. The isopentenyl diphosphate site is built by His42 and His75. Position 97 (Cys97) interacts with [4Fe-4S] cluster. His125 is a (2E)-4-hydroxy-3-methylbut-2-enyl diphosphate binding site. His125 provides a ligand contact to dimethylallyl diphosphate. Isopentenyl diphosphate is bound at residue His125. Glu127 acts as the Proton donor in catalysis. Thr165 is a (2E)-4-hydroxy-3-methylbut-2-enyl diphosphate binding site. Residue Cys195 coordinates [4Fe-4S] cluster. 4 residues coordinate (2E)-4-hydroxy-3-methylbut-2-enyl diphosphate: Ser223, Ser224, Asn225, and Ser267. 4 residues coordinate dimethylallyl diphosphate: Ser223, Ser224, Asn225, and Ser267. Isopentenyl diphosphate contacts are provided by Ser223, Ser224, Asn225, and Ser267.

This sequence belongs to the IspH family. The cofactor is [4Fe-4S] cluster.

The catalysed reaction is isopentenyl diphosphate + 2 oxidized [2Fe-2S]-[ferredoxin] + H2O = (2E)-4-hydroxy-3-methylbut-2-enyl diphosphate + 2 reduced [2Fe-2S]-[ferredoxin] + 2 H(+). It catalyses the reaction dimethylallyl diphosphate + 2 oxidized [2Fe-2S]-[ferredoxin] + H2O = (2E)-4-hydroxy-3-methylbut-2-enyl diphosphate + 2 reduced [2Fe-2S]-[ferredoxin] + 2 H(+). The protein operates within isoprenoid biosynthesis; dimethylallyl diphosphate biosynthesis; dimethylallyl diphosphate from (2E)-4-hydroxy-3-methylbutenyl diphosphate: step 1/1. It functions in the pathway isoprenoid biosynthesis; isopentenyl diphosphate biosynthesis via DXP pathway; isopentenyl diphosphate from 1-deoxy-D-xylulose 5-phosphate: step 6/6. Catalyzes the conversion of 1-hydroxy-2-methyl-2-(E)-butenyl 4-diphosphate (HMBPP) into a mixture of isopentenyl diphosphate (IPP) and dimethylallyl diphosphate (DMAPP). Acts in the terminal step of the DOXP/MEP pathway for isoprenoid precursor biosynthesis. This chain is 4-hydroxy-3-methylbut-2-enyl diphosphate reductase, found in Chlamydia felis (strain Fe/C-56) (Chlamydophila felis).